The following is a 30-amino-acid chain: Acyl-CoA-binding protein 1 (30 aa).

Basic and acidic residues predominate over residues 1-15 (ALKDEFEEHAEKAKT). The tract at residues 1–30 (ALKDEFEEHAEKAKTLPENTSNENKLILYG) is disordered. Residues 2-30 (LKDEFEEHAEKAKTLPENTSNENKLILYG) enclose the ACB domain.

The protein belongs to the ACBP family.

The protein localises to the cytoplasm. Functionally, binds medium- and long-chain acyl-CoA esters with very high affinity and may function as an intracellular carrier of acyl-CoA esters. The polypeptide is Acyl-CoA-binding protein 1 (Digitalis lanata (Grecian foxglove)).